The chain runs to 200 residues: uncharacterized protein (200 aa).

The N-terminal stretch at methionine 1 to serine 19 is a signal peptide. Residues phenylalanine 148–glutamine 168 form a helical membrane-spanning segment.

The protein resides in the membrane. This is an uncharacterized protein from Caenorhabditis elegans.